Reading from the N-terminus, the 47-residue chain is Photosystem II reaction center protein K (47 aa).

The propeptide occupies 1 to 10 (MNIGFDMILA). The chain crosses the membrane as a helical span at residues 22 to 42 (LVDVLPVIPLLFLLLAFVWQA).

It belongs to the PsbK family. PSII is composed of 1 copy each of membrane proteins PsbA, PsbB, PsbC, PsbD, PsbE, PsbF, PsbH, PsbI, PsbJ, PsbK, PsbL, PsbM, PsbT, PsbX, PsbY, PsbZ, Psb30/Ycf12, at least 3 peripheral proteins of the oxygen-evolving complex and a large number of cofactors. It forms dimeric complexes.

Its subcellular location is the plastid. It localises to the chloroplast thylakoid membrane. In terms of biological role, one of the components of the core complex of photosystem II (PSII). PSII is a light-driven water:plastoquinone oxidoreductase that uses light energy to abstract electrons from H(2)O, generating O(2) and a proton gradient subsequently used for ATP formation. It consists of a core antenna complex that captures photons, and an electron transfer chain that converts photonic excitation into a charge separation. The chain is Photosystem II reaction center protein K from Mesostigma viride (Green alga).